A 44-amino-acid polypeptide reads, in one-letter code: Alpha-amylase inhibitor WDAI-3 (44 aa).

The cysteines at positions 20 and 41 are disulfide-linked.

Belongs to the protease inhibitor I6 (cereal trypsin/alpha-amylase inhibitor) family. In terms of assembly, homodimer. In terms of processing, the disulfide bonds are essential for the inhibitor activity. Endosperm.

Its subcellular location is the secreted. Functionally, alpha-amylase inhibitor. The chain is Alpha-amylase inhibitor WDAI-3 (IHA-B1-2) from Triticum aestivum (Wheat).